The chain runs to 651 residues: Probable endo-1,3(4)-beta-glucanase NFIA_089530 (651 aa).

Positions 1–21 are cleaved as a signal peptide; the sequence is MAPSSLFLSVGSLIASSLVSA. The GH16 domain occupies 36-289; that stretch reads ESWQGESFIN…WAGNVFAEST (254 aa). An N-linked (GlcNAc...) asparagine glycan is attached at asparagine 64. The Nucleophile role is filled by glutamate 145. The active-site Proton donor is glutamate 150. N-linked (GlcNAc...) asparagine glycosylation occurs at asparagine 200. Low complexity predominate over residues 364–378; that stretch reads PVPAETTAVPQPAQT. Disordered regions lie at residues 364 to 422 and 508 to 557; these read PVPA…ESTS and SEIP…PVPA. 2 stretches are compositionally biased toward polar residues: residues 379–400 and 520–535; these read NTVA…TTVP and QAVS…TAQG. The span at 542-557 shows a compositional bias: low complexity; sequence SIASASAAPSTIPVPA. The GPI-anchor amidated asparagine moiety is linked to residue asparagine 629. Positions 630–651 are cleaved as a propeptide — removed in mature form; it reads GANRMSVGLSGLIGVMFIAALA.

This sequence belongs to the glycosyl hydrolase 16 family.

It localises to the cell membrane. The enzyme catalyses Endohydrolysis of (1-&gt;3)- or (1-&gt;4)-linkages in beta-D-glucans when the glucose residue whose reducing group is involved in the linkage to be hydrolyzed is itself substituted at C-3.. Functionally, mixed-linked glucanase involved in the degradation of complex natural cellulosic substrates. This Neosartorya fischeri (strain ATCC 1020 / DSM 3700 / CBS 544.65 / FGSC A1164 / JCM 1740 / NRRL 181 / WB 181) (Aspergillus fischerianus) protein is Probable endo-1,3(4)-beta-glucanase NFIA_089530.